Here is a 320-residue protein sequence, read N- to C-terminus: o-succinylbenzoate synthase (320 aa).

Lys-133 serves as the catalytic Proton donor. Residues Asp-161, Glu-190, and Asp-213 each contribute to the Mg(2+) site. The active-site Proton acceptor is the Lys-235.

It belongs to the mandelate racemase/muconate lactonizing enzyme family. MenC type 1 subfamily. The cofactor is a divalent metal cation.

It carries out the reaction (1R,6R)-6-hydroxy-2-succinyl-cyclohexa-2,4-diene-1-carboxylate = 2-succinylbenzoate + H2O. Its pathway is quinol/quinone metabolism; 1,4-dihydroxy-2-naphthoate biosynthesis; 1,4-dihydroxy-2-naphthoate from chorismate: step 4/7. The protein operates within quinol/quinone metabolism; menaquinone biosynthesis. In terms of biological role, converts 2-succinyl-6-hydroxy-2,4-cyclohexadiene-1-carboxylate (SHCHC) to 2-succinylbenzoate (OSB). In Salmonella dublin (strain CT_02021853), this protein is o-succinylbenzoate synthase.